We begin with the raw amino-acid sequence, 87 residues long: Small ribosomal subunit protein uS17 (87 aa).

The protein belongs to the universal ribosomal protein uS17 family. Part of the 30S ribosomal subunit.

One of the primary rRNA binding proteins, it binds specifically to the 5'-end of 16S ribosomal RNA. The chain is Small ribosomal subunit protein uS17 from Oceanobacillus iheyensis (strain DSM 14371 / CIP 107618 / JCM 11309 / KCTC 3954 / HTE831).